A 429-amino-acid chain; its full sequence is Choline kinase A2 (429 aa).

Residues 82-88, arginine 111, 152-158, and glutamine 257 contribute to the ATP site; these read KGGMSNM and EYIPSRP. Substrate is bound at residue 84-86; the sequence is GMS. Glutamate 258 is a Ca(2+) binding site. Aspartate 301 is an ATP binding site. Residues glutamate 320 and isoleucine 323 each coordinate Ca(2+).

This sequence belongs to the choline/ethanolamine kinase family. In terms of assembly, homodimer. A small proportion exists as higher oligomers. The cofactor is Mg(2+).

The catalysed reaction is choline + ATP = phosphocholine + ADP + H(+). It catalyses the reaction ethanolamine + ATP = phosphoethanolamine + ADP + H(+). The protein operates within phospholipid metabolism; phosphatidylcholine biosynthesis; phosphocholine from choline: step 1/1. Its pathway is phospholipid metabolism; phosphatidylethanolamine biosynthesis; phosphatidylethanolamine from ethanolamine: step 1/3. Its activity is regulated as follows. Inhibited by Ca(2+). Mild inhibition by high levels of Mg(2+)(&gt;10 mM). Functionally, catalyzes the first step in phosphatidylcholine biosynthesis. May contribute to phosphatidylethanolamine biosynthesis. Phosphorylates choline and ethanolamine but the activity is much higher with choline. This Caenorhabditis elegans protein is Choline kinase A2.